Here is a 385-residue protein sequence, read N- to C-terminus: Flap endonuclease 1 (385 aa).

The interval 1–104 is N-domain; it reads MGILGLSKLI…GELAKRAERR (104 aa). D34 serves as a coordination point for Mg(2+). DNA is bound by residues R47 and R70. The Mg(2+) site is built by D86, E158, E160, D179, and D181. Residues 122-253 are I-domain; it reads GIEKFNRRLV…KRAIELINTY (132 aa). E158 contacts DNA. Positions 231 and 233 each coordinate DNA. D233 is a binding site for Mg(2+). The tract at residues 336 to 344 is interaction with PCNA; sequence TQVRLDSFF. Residues 346–385 form a disordered region; that stretch reads TLPSTPNATNAAKRKAEEAKKSANNKKAKTSGGGRGRRPK. Residues 368–385 are compositionally biased toward basic residues; the sequence is ANNKKAKTSGGGRGRRPK.

This sequence belongs to the XPG/RAD2 endonuclease family. FEN1 subfamily. In terms of assembly, interacts with PCNA. Three molecules of FEN1 bind to one PCNA trimer with each molecule binding to one PCNA monomer. PCNA stimulates the nuclease activity without altering cleavage specificity. Requires Mg(2+) as cofactor. In terms of processing, phosphorylated. Phosphorylation upon DNA damage induces relocalization to the nuclear plasma.

The protein localises to the nucleus. It localises to the nucleolus. It is found in the nucleoplasm. Its subcellular location is the mitochondrion. Structure-specific nuclease with 5'-flap endonuclease and 5'-3' exonuclease activities involved in DNA replication and repair. During DNA replication, cleaves the 5'-overhanging flap structure that is generated by displacement synthesis when DNA polymerase encounters the 5'-end of a downstream Okazaki fragment. It enters the flap from the 5'-end and then tracks to cleave the flap base, leaving a nick for ligation. Also involved in the long patch base excision repair (LP-BER) pathway, by cleaving within the apurinic/apyrimidinic (AP) site-terminated flap. Acts as a genome stabilization factor that prevents flaps from equilibrating into structures that lead to duplications and deletions. Also possesses 5'-3' exonuclease activity on nicked or gapped double-stranded DNA, and exhibits RNase H activity. Also involved in replication and repair of rDNA and in repairing mitochondrial DNA. The sequence is that of Flap endonuclease 1 from Drosophila melanogaster (Fruit fly).